Consider the following 212-residue polypeptide: 3-isopropylmalate dehydratase small subunit (212 aa).

The protein belongs to the LeuD family. LeuD type 1 subfamily. Heterodimer of LeuC and LeuD.

The catalysed reaction is (2R,3S)-3-isopropylmalate = (2S)-2-isopropylmalate. It functions in the pathway amino-acid biosynthesis; L-leucine biosynthesis; L-leucine from 3-methyl-2-oxobutanoate: step 2/4. In terms of biological role, catalyzes the isomerization between 2-isopropylmalate and 3-isopropylmalate, via the formation of 2-isopropylmaleate. The sequence is that of 3-isopropylmalate dehydratase small subunit from Laribacter hongkongensis (strain HLHK9).